Here is a 173-residue protein sequence, read N- to C-terminus: Crossover junction endodeoxyribonuclease RuvC (173 aa).

Residues Asp-8, Glu-67, and Asp-139 contribute to the active site. Residues Asp-8, Glu-67, and Asp-139 each contribute to the Mg(2+) site.

It belongs to the RuvC family. In terms of assembly, homodimer which binds Holliday junction (HJ) DNA. The HJ becomes 2-fold symmetrical on binding to RuvC with unstacked arms; it has a different conformation from HJ DNA in complex with RuvA. In the full resolvosome a probable DNA-RuvA(4)-RuvB(12)-RuvC(2) complex forms which resolves the HJ. Mg(2+) is required as a cofactor.

The protein localises to the cytoplasm. It carries out the reaction Endonucleolytic cleavage at a junction such as a reciprocal single-stranded crossover between two homologous DNA duplexes (Holliday junction).. Functionally, the RuvA-RuvB-RuvC complex processes Holliday junction (HJ) DNA during genetic recombination and DNA repair. Endonuclease that resolves HJ intermediates. Cleaves cruciform DNA by making single-stranded nicks across the HJ at symmetrical positions within the homologous arms, yielding a 5'-phosphate and a 3'-hydroxyl group; requires a central core of homology in the junction. The consensus cleavage sequence is 5'-(A/T)TT(C/G)-3'. Cleavage occurs on the 3'-side of the TT dinucleotide at the point of strand exchange. HJ branch migration catalyzed by RuvA-RuvB allows RuvC to scan DNA until it finds its consensus sequence, where it cleaves and resolves the cruciform DNA. In Citrobacter koseri (strain ATCC BAA-895 / CDC 4225-83 / SGSC4696), this protein is Crossover junction endodeoxyribonuclease RuvC.